A 164-amino-acid polypeptide reads, in one-letter code: Galectin-3 (164 aa).

The Galectin domain occupies Ser9–Leu154. 6 residues coordinate a carbohydrate: Asn45, Arg64, Asn73, Arg81, Glu84, and Asn138.

Homotetramer. Oligomerization is required for carbohydrate binding.

It localises to the secreted. It is found in the extracellular space. The protein localises to the extracellular matrix. Its subcellular location is the cell wall. Functionally, binds complex carbohydrates, such as chitooligosaccharides. Does not bind lactose. May play a role in fruiting body formation. In Coprinopsis cinerea (Inky cap fungus), this protein is Galectin-3 (Cgl3).